A 94-amino-acid chain; its full sequence is Co-chaperonin GroES (94 aa).

The protein belongs to the GroES chaperonin family. In terms of assembly, heptamer of 7 subunits arranged in a ring. Interacts with the chaperonin GroEL.

Its subcellular location is the cytoplasm. In terms of biological role, together with the chaperonin GroEL, plays an essential role in assisting protein folding. The GroEL-GroES system forms a nano-cage that allows encapsulation of the non-native substrate proteins and provides a physical environment optimized to promote and accelerate protein folding. GroES binds to the apical surface of the GroEL ring, thereby capping the opening of the GroEL channel. In Streptococcus equinus (Streptococcus bovis), this protein is Co-chaperonin GroES.